The following is a 132-amino-acid chain: Sirohydrochlorin cobaltochelatase (132 aa).

The active-site Proton acceptor is H10. H10 lines the Co(2+) pocket. Substrate-binding positions include R46 and 69–74 (ISYGLH). H74 is a Co(2+) binding site.

The protein belongs to the CbiX family. CbiXS subfamily. As to quaternary structure, homotetramer; dimer of dimers.

It carries out the reaction Co-sirohydrochlorin + 2 H(+) = sirohydrochlorin + Co(2+). Its pathway is cofactor biosynthesis; adenosylcobalamin biosynthesis; cob(II)yrinate a,c-diamide from sirohydrochlorin (anaerobic route): step 1/10. In terms of biological role, catalyzes the insertion of Co(2+) into sirohydrochlorin as part of the anaerobic pathway to cobalamin biosynthesis. This Archaeoglobus fulgidus (strain ATCC 49558 / DSM 4304 / JCM 9628 / NBRC 100126 / VC-16) protein is Sirohydrochlorin cobaltochelatase.